We begin with the raw amino-acid sequence, 852 residues long: Probable nitrite reductase-hydroxylamine oxidoreductase fusion protein (852 aa).

An N-terminal signal peptide occupies residues 1–27 (MLNKSAALVPVVLAFLFLFLCFQCLYA). The nitrite reductase domain stretch occupies residues 28 to 327 (DIRCLTGKDG…DEGRKTLSAP (300 aa)). Plastocyanin-like domains are found at residues 72–169 (VPGP…IVEP) and 217–307 (GETW…VEEG). The Cu cation site is built by His-102 and His-145. The tract at residues 328–827 (GQDRQPPTLE…ISWWWGTAQG (500 aa)) is hydroxylamine oxidoreductase domain. Positions 406, 409, 410, 426, 463, 466, 467, 471, 483, 486, 487, 505, 537, 543, 546, 547, 550, 563, 566, 567, 614, 617, 618, 686, 689, 690, and 813 each coordinate heme.

The protein in the N-terminal section; belongs to the multicopper oxidase family. It depends on Cu cation as a cofactor. The cofactor is heme.

The protein resides in the encapsulin nanocompartment. The catalysed reaction is hydroxylamine + 4 Fe(III)-[cytochrome c] + H2O = 4 Fe(II)-[cytochrome c] + nitrite + 5 H(+). It carries out the reaction nitric oxide + Fe(III)-[cytochrome c] + H2O = Fe(II)-[cytochrome c] + nitrite + 2 H(+). Functionally, a nitrite reductase-hydroxylamine oxidoreductase protein that probably functions in the type 1 encapsulin nanocompartment. Probably involved in reductive catalysis. Targeted to the encapsulin nanocompartment by association with the diheme domain of the encapsulin shell protein (AC Q1Q6L7). Catalyzes the reduction of nitrite to nitric oxide (NO). Catalyzes the oxidation of hydroxylamine to nitrite. The chain is Probable nitrite reductase-hydroxylamine oxidoreductase fusion protein from Kuenenia stuttgartiensis.